Reading from the N-terminus, the 295-residue chain is 33 kDa chaperonin (295 aa).

Cystine bridges form between cysteine 236-cysteine 238 and cysteine 269-cysteine 272.

This sequence belongs to the HSP33 family. Post-translationally, under oxidizing conditions two disulfide bonds are formed involving the reactive cysteines. Under reducing conditions zinc is bound to the reactive cysteines and the protein is inactive.

It localises to the cytoplasm. Functionally, redox regulated molecular chaperone. Protects both thermally unfolding and oxidatively damaged proteins from irreversible aggregation. Plays an important role in the bacterial defense system toward oxidative stress. In Geobacter sp. (strain M21), this protein is 33 kDa chaperonin.